Here is a 136-residue protein sequence, read N- to C-terminus: Group 1 truncated hemoglobin GlbN (136 aa).

H81 lines the heme pocket.

The protein belongs to the truncated hemoglobin family. Group I subfamily. Homodimer. Heme serves as cofactor.

Binds oxygen cooperatively with very high affinity because of a fast combination and a slow dissociation rate. The polypeptide is Group 1 truncated hemoglobin GlbN (glbN) (Mycolicibacterium paratuberculosis (strain ATCC BAA-968 / K-10) (Mycobacterium paratuberculosis)).